A 247-amino-acid polypeptide reads, in one-letter code: MRSGVIAQKVGMTRVFTEAGEHIPVTVLKLSNCQVLGHRTSEKNGYVALQLGSGARKTVYMPKAERGQFAVAKVAPKRKVAEFRVSEDSLIPVGAEIQADHFVVGQFVDVTGTSVGKGYAGGMKRWNFGGLRATHGVSISHRSIGSTGGRQDPGKTFKNKKMPGHMGVDRITTLNLRVVQTDVERGLILVEGAVPGSKGGWIAVRDAVKKPLPKEAPKPGKFKVVGDAQAVDEDKAPADTPAEKEGA.

Disordered stretches follow at residues 140–164 (SHRSIGSTGGRQDPGKTFKNKKMPG) and 212–247 (LPKEAPKPGKFKVVGDAQAVDEDKAPADTPAEKEGA). An N5-methylglutamine modification is found at Q151. Residues 232-247 (DEDKAPADTPAEKEGA) show a composition bias toward basic and acidic residues.

The protein belongs to the universal ribosomal protein uL3 family. Part of the 50S ribosomal subunit. Forms a cluster with proteins L14 and L19. Methylated by PrmB.

Its function is as follows. One of the primary rRNA binding proteins, it binds directly near the 3'-end of the 23S rRNA, where it nucleates assembly of the 50S subunit. The protein is Large ribosomal subunit protein uL3 of Nitrobacter winogradskyi (strain ATCC 25391 / DSM 10237 / CIP 104748 / NCIMB 11846 / Nb-255).